Reading from the N-terminus, the 74-residue chain is MATWIWILIVIVVGLACAAGGFYGARKYMENYLKDNPPINEDQLRAMMLQMGQKPSQRKLHQMMAAMQQNARKK.

Residues 4–24 traverse the membrane as a helical segment; that stretch reads WIWILIVIVVGLACAAGGFYG.

Belongs to the UPF0154 family.

It is found in the cell membrane. This chain is UPF0154 protein LVIS_1358, found in Levilactobacillus brevis (strain ATCC 367 / BCRC 12310 / CIP 105137 / JCM 1170 / LMG 11437 / NCIMB 947 / NCTC 947) (Lactobacillus brevis).